Here is a 110-residue protein sequence, read N- to C-terminus: Small ribosomal subunit protein uS10m (110 aa).

This sequence belongs to the universal ribosomal protein uS10 family.

Its subcellular location is the mitochondrion. The chain is Small ribosomal subunit protein uS10m (RPS10) from Pisum sativum (Garden pea).